The primary structure comprises 1237 residues: Structural protein VP1 (1237 aa).

In terms of domain architecture, PPPDE spans 1006 to 1222 (EPLRTLLFKL…ENDVRIAMIH (217 aa)). Catalysis depends on residues His1040 and Cys1192.

The protein localises to the virion. This is Structural protein VP1 from Rice ragged stunt virus (isolate Thailand) (RRSV).